Reading from the N-terminus, the 253-residue chain is tRNA pseudouridine synthase A (253 aa).

Residue aspartate 52 is the Nucleophile of the active site. Tyrosine 110 contacts substrate.

Belongs to the tRNA pseudouridine synthase TruA family. Homodimer.

The catalysed reaction is uridine(38/39/40) in tRNA = pseudouridine(38/39/40) in tRNA. Its function is as follows. Formation of pseudouridine at positions 38, 39 and 40 in the anticodon stem and loop of transfer RNAs. The polypeptide is tRNA pseudouridine synthase A (Thermus thermophilus (strain ATCC BAA-163 / DSM 7039 / HB27)).